Reading from the N-terminus, the 887-residue chain is Bifunctional uridylyltransferase/uridylyl-removing enzyme (887 aa).

The segment at 1 to 329 is uridylyltransferase; the sequence is MKGLNAKPFS…FPDEEAVTTI (329 aa). Positions 330–686 are uridylyl-removing; sequence INERFQKRGD…TRAAETGAGV (357 aa). Residues 448–570 enclose the HD domain; sequence VDEHILMVVR…MRDERHLIAL (123 aa). ACT domains are found at residues 687 to 772 and 796 to 871; these read EVLV…GRLS and VLSI…PETP. A disordered region spans residues 864–887; sequence TSPQPETPGKAPGKPSAGDRIIPR.

This sequence belongs to the GlnD family. It depends on Mg(2+) as a cofactor.

It carries out the reaction [protein-PII]-L-tyrosine + UTP = [protein-PII]-uridylyl-L-tyrosine + diphosphate. It catalyses the reaction [protein-PII]-uridylyl-L-tyrosine + H2O = [protein-PII]-L-tyrosine + UMP + H(+). Its activity is regulated as follows. Uridylyltransferase (UTase) activity is inhibited by glutamine, while glutamine activates uridylyl-removing (UR) activity. Functionally, modifies, by uridylylation and deuridylylation, the PII regulatory proteins (GlnB and homologs), in response to the nitrogen status of the cell that GlnD senses through the glutamine level. Under low glutamine levels, catalyzes the conversion of the PII proteins and UTP to PII-UMP and PPi, while under higher glutamine levels, GlnD hydrolyzes PII-UMP to PII and UMP (deuridylylation). Thus, controls uridylylation state and activity of the PII proteins, and plays an important role in the regulation of nitrogen assimilation and metabolism. The sequence is that of Bifunctional uridylyltransferase/uridylyl-removing enzyme from Nitrosospira multiformis (strain ATCC 25196 / NCIMB 11849 / C 71).